The following is a 387-amino-acid chain: Cytochrome b (387 aa).

A run of 4 helical transmembrane segments spans residues 32-52, 76-98, 113-133, and 179-199; these read FGSLLLLCLIIQIITGVTLAM, WLVRYLHSNTASAFFFLVYLHIG, VWAIGTVILIVMIVTAFLGYV, and FFALHYLLPFILVALVLMHLI. Heme b-binding residues include His82 and His96. Heme b is bound by residues His183 and His197. His202 lines the a ubiquinone pocket. 4 consecutive transmembrane segments (helical) span residues 226–246, 290–310, 322–342, and 349–369; these read YLFKDLITIFIFIFVLSSFVF, LLGVIAMFAAILAIMLLPITD, LSKFAFWVFVVNFLILMKLGA, and FIELGQLSTALYFGHFIIIVP.

Belongs to the cytochrome b family. Fungal cytochrome b-c1 complex contains 10 subunits; 3 respiratory subunits, 2 core proteins and 5 low-molecular weight proteins. Cytochrome b-c1 complex is a homodimer. Heme b serves as cofactor.

Its subcellular location is the mitochondrion inner membrane. Its function is as follows. Component of the ubiquinol-cytochrome c reductase complex (complex III or cytochrome b-c1 complex) that is part of the mitochondrial respiratory chain. The b-c1 complex mediates electron transfer from ubiquinol to cytochrome c. Contributes to the generation of a proton gradient across the mitochondrial membrane that is then used for ATP synthesis. The protein is Cytochrome b (COB) of Podospora anserina (strain S / ATCC MYA-4624 / DSM 980 / FGSC 10383) (Pleurage anserina).